A 291-amino-acid polypeptide reads, in one-letter code: tRNA dimethylallyltransferase (291 aa).

9 to 16 (GTTASGKT) contributes to the ATP binding site. A substrate-binding site is contributed by 11 to 16 (TASGKT). The tract at residues 34 to 37 (DSLC) is interaction with substrate tRNA.

This sequence belongs to the IPP transferase family. In terms of assembly, monomer. Mg(2+) is required as a cofactor.

The catalysed reaction is adenosine(37) in tRNA + dimethylallyl diphosphate = N(6)-dimethylallyladenosine(37) in tRNA + diphosphate. In terms of biological role, catalyzes the transfer of a dimethylallyl group onto the adenine at position 37 in tRNAs that read codons beginning with uridine, leading to the formation of N6-(dimethylallyl)adenosine (i(6)A). In Campylobacter lari (strain RM2100 / D67 / ATCC BAA-1060), this protein is tRNA dimethylallyltransferase.